The following is a 229-amino-acid chain: Large ribosomal subunit protein uL1 (229 aa).

Belongs to the universal ribosomal protein uL1 family. As to quaternary structure, part of the 50S ribosomal subunit.

Binds directly to 23S rRNA. The L1 stalk is quite mobile in the ribosome, and is involved in E site tRNA release. Its function is as follows. Protein L1 is also a translational repressor protein, it controls the translation of the L11 operon by binding to its mRNA. The sequence is that of Large ribosomal subunit protein uL1 from Actinobacillus pleuropneumoniae serotype 3 (strain JL03).